Reading from the N-terminus, the 276-residue chain is NADPH-dependent 7-cyano-7-deazaguanine reductase (276 aa).

83 to 85 (IES) is a binding site for substrate. 85-86 (SK) is an NADPH binding site. The active-site Thioimide intermediate is Cys-184. Asp-191 (proton donor) is an active-site residue. Substrate is bound at residue 223–224 (HE). Position 252-253 (252-253 (RG)) interacts with NADPH.

It belongs to the GTP cyclohydrolase I family. QueF type 2 subfamily. As to quaternary structure, homodimer.

Its subcellular location is the cytoplasm. The catalysed reaction is 7-aminomethyl-7-carbaguanine + 2 NADP(+) = 7-cyano-7-deazaguanine + 2 NADPH + 3 H(+). Its pathway is tRNA modification; tRNA-queuosine biosynthesis. Catalyzes the NADPH-dependent reduction of 7-cyano-7-deazaguanine (preQ0) to 7-aminomethyl-7-deazaguanine (preQ1). This chain is NADPH-dependent 7-cyano-7-deazaguanine reductase, found in Pseudomonas fluorescens (strain Pf0-1).